The primary structure comprises 196 residues: Probable GTP-binding protein EngB (196 aa).

Positions 22-196 (NLPEIALSGR…GNWIEEKISK (175 aa)) constitute an EngB-type G domain. Residues 30–37 (GRSNVGKS), 57–61 (GKTQT), 75–78 (DVPG), 142–145 (TKID), and 175–177 (FSS) each bind GTP. Positions 37 and 59 each coordinate Mg(2+).

It belongs to the TRAFAC class TrmE-Era-EngA-EngB-Septin-like GTPase superfamily. EngB GTPase family. Mg(2+) is required as a cofactor.

Its function is as follows. Necessary for normal cell division and for the maintenance of normal septation. The protein is Probable GTP-binding protein EngB of Lactobacillus helveticus (strain DPC 4571).